We begin with the raw amino-acid sequence, 193 residues long: Probable GTP-binding protein EngB (193 aa).

The EngB-type G domain maps to N24–L193. GTP-binding positions include G32 to S39, G59 to T63, D77 to G80, T144 to D147, and F174 to A176. Mg(2+) contacts are provided by S39 and T61.

It belongs to the TRAFAC class TrmE-Era-EngA-EngB-Septin-like GTPase superfamily. EngB GTPase family. The cofactor is Mg(2+).

Its function is as follows. Necessary for normal cell division and for the maintenance of normal septation. In Syntrophomonas wolfei subsp. wolfei (strain DSM 2245B / Goettingen), this protein is Probable GTP-binding protein EngB.